The primary structure comprises 149 residues: UPF0336 protein Lxx02810 (149 aa).

This sequence belongs to the UPF0336 family.

The protein is UPF0336 protein Lxx02810 of Leifsonia xyli subsp. xyli (strain CTCB07).